A 784-amino-acid chain; its full sequence is Lon protease (784 aa).

A Lon N-terminal domain is found at 6–207; it reads LPLMALRDMV…TVITTLTSNI (202 aa). 356 to 363 serves as a coordination point for ATP; it reads GPPGVGKT. The region spanning 592 to 773 is the Lon proteolytic domain; the sequence is EDQIGSTTGL…DQVLKHALVE (182 aa). Catalysis depends on residues S679 and K722.

This sequence belongs to the peptidase S16 family. In terms of assembly, homohexamer. Organized in a ring with a central cavity.

It localises to the cytoplasm. The catalysed reaction is Hydrolysis of proteins in presence of ATP.. Functionally, ATP-dependent serine protease that mediates the selective degradation of mutant and abnormal proteins as well as certain short-lived regulatory proteins. Required for cellular homeostasis and for survival from DNA damage and developmental changes induced by stress. Degrades polypeptides processively to yield small peptide fragments that are 5 to 10 amino acids long. Binds to DNA in a double-stranded, site-specific manner. The polypeptide is Lon protease (Rickettsia prowazekii (strain Madrid E)).